Reading from the N-terminus, the 435-residue chain is Cytochrome c biogenesis protein CcsB (435 aa).

Helical transmembrane passes span 14–34 (LRLA…GTIL), 72–92 (SVWF…CSWR), and 162–182 (VGPL…AWGA).

It belongs to the Ccs1/CcsB family. In terms of assembly, may interact with CcsA.

The protein resides in the cellular thylakoid membrane. Functionally, required during biogenesis of c-type cytochromes (cytochrome c6 and cytochrome f) at the step of heme attachment. This Synechococcus sp. (strain CC9311) protein is Cytochrome c biogenesis protein CcsB.